The chain runs to 100 residues: Urease subunit gamma (100 aa).

This sequence belongs to the urease gamma subunit family. Heterotrimer of UreA (gamma), UreB (beta) and UreC (alpha) subunits. Three heterotrimers associate to form the active enzyme.

It localises to the cytoplasm. The catalysed reaction is urea + 2 H2O + H(+) = hydrogencarbonate + 2 NH4(+). The protein operates within nitrogen metabolism; urea degradation; CO(2) and NH(3) from urea (urease route): step 1/1. This is Urease subunit gamma from Pseudarthrobacter chlorophenolicus (strain ATCC 700700 / DSM 12829 / CIP 107037 / JCM 12360 / KCTC 9906 / NCIMB 13794 / A6) (Arthrobacter chlorophenolicus).